We begin with the raw amino-acid sequence, 645 residues long: Sodium-dependent nutrient amino acid transporter 1 (645 aa).

The disordered stretch occupies residues 1–48 (MELKTMPHNGANGSPQHNNNNNSNNNNNVSSDTKTDNNEKEAQKKDEG). Over 1-51 (MELKTMPHNGANGSPQHNNNNNSNNNNNVSSDTKTDNNEKEAQKKDEGRTN) the chain is Cytoplasmic. Residues 18 to 32 (NNNNNSNNNNNVSSD) show a composition bias toward low complexity. Over residues 33–48 (TKTDNNEKEAQKKDEG) the composition is skewed to basic and acidic residues. A run of 3 helical transmembrane segments spans residues 52–72 (WSNGIEFLMSCISVSVGLGNV), 85–105 (GAFLIPYIIVLFLIGKPMYYL), and 138–158 (TICIITYYSSLLALTLYYLFV). N-linked (GlcNAc...) asparagine glycosylation is found at asparagine 191 and asparagine 205. 7 helical membrane-spanning segments follow: residues 234–254 (IPDWKLTIALFVSWVVIFLVI), 264–284 (AAYFLALFPYVVLFALLGRAV), 313–333 (AVVQCFFSLAVGCGPIIMFAS), 347–367 (IVTTLDTLTSLLGGITIFAIL), 407–427 (LFSVLFFFMLFVLGIGSIVAL), 454–474 (CGFLMGLVYVTPGGQWILTLV), and 480–500 (TYVVFILAIFELSGIVWIYGL). Residue asparagine 514 is glycosylated (N-linked (GlcNAc...) asparagine). Helical transmembrane passes span 522-542 (CWSFFTPVMMIVIFIYSMATI) and 559-579 (AGWLLFAVGAAQFPLWGWWYI).

It belongs to the sodium:neurotransmitter symporter (SNF) (TC 2.A.22) family.

The protein localises to the membrane. In terms of biological role, unusual broad substrate spectrum amino acid:sodium cotransporter that promotes absorption of the D isomers of essential amino acids. Neutral amino acids are the preferred substrates, especially methionine and phenylalanine. This is Sodium-dependent nutrient amino acid transporter 1 from Drosophila mojavensis (Fruit fly).